The chain runs to 273 residues: Shikimate dehydrogenase (NADP(+)) (273 aa).

Residues 15–17 (SKS) and threonine 62 contribute to the shikimate site. The active-site Proton acceptor is lysine 66. Aspartate 78 lines the NADP(+) pocket. Residues asparagine 87 and aspartate 103 each contribute to the shikimate site. NADP(+) contacts are provided by residues 127 to 131 (GAGGA), 150 to 155 (NRTYAR), and methionine 214. Tyrosine 216 is a binding site for shikimate. Glycine 238 lines the NADP(+) pocket.

It belongs to the shikimate dehydrogenase family. As to quaternary structure, homodimer.

It catalyses the reaction shikimate + NADP(+) = 3-dehydroshikimate + NADPH + H(+). The protein operates within metabolic intermediate biosynthesis; chorismate biosynthesis; chorismate from D-erythrose 4-phosphate and phosphoenolpyruvate: step 4/7. Involved in the biosynthesis of the chorismate, which leads to the biosynthesis of aromatic amino acids. Catalyzes the reversible NADPH linked reduction of 3-dehydroshikimate (DHSA) to yield shikimate (SA). The sequence is that of Shikimate dehydrogenase (NADP(+)) from Yersinia enterocolitica serotype O:8 / biotype 1B (strain NCTC 13174 / 8081).